We begin with the raw amino-acid sequence, 138 residues long: Drosulfakinins (138 aa).

Positions 1–33 (MGLRSCTHFATLVMPLWALAFCFLVLVPVPAQT) are cleaved as a signal peptide. Positions 34–73 (TSLQISKGDRRLQDLESNMGAESDQPNANLVGTSLSRFGD) are excised as a propeptide. F82 carries the phenylalanine amide modification. A propeptide spanning residues 86 to 108 (VPRPIIPIELDLLMDNDDENTKA) is cleaved from the precursor. Y114 is subject to Sulfotyrosine. Residue F119 is modified to Phenylalanine amide. Y131 is modified (sulfotyrosine). Residue F136 is modified to Phenylalanine amide.

The protein belongs to the gastrin/cholecystokinin family.

Its subcellular location is the secreted. Its function is as follows. Drosulfakinin-0 (DSK 0) plays diverse biological roles including regulating gut muscle contraction in adults but not in larvae. The protein is Drosulfakinins of Drosophila teissieri (Fruit fly).